The chain runs to 255 residues: ATP synthase subunit b 1 (255 aa).

The helical transmembrane segment at 5–22 (WITVAAQIVNFLLLIWLL) threads the bilayer.

It belongs to the ATPase B chain family. In terms of assembly, F-type ATPases have 2 components, F(1) - the catalytic core - and F(0) - the membrane proton channel. F(1) has five subunits: alpha(3), beta(3), gamma(1), delta(1), epsilon(1). F(0) has three main subunits: a(1), b(2) and c(10-14). The alpha and beta chains form an alternating ring which encloses part of the gamma chain. F(1) is attached to F(0) by a central stalk formed by the gamma and epsilon chains, while a peripheral stalk is formed by the delta and b chains.

It localises to the cell inner membrane. Functionally, f(1)F(0) ATP synthase produces ATP from ADP in the presence of a proton or sodium gradient. F-type ATPases consist of two structural domains, F(1) containing the extramembraneous catalytic core and F(0) containing the membrane proton channel, linked together by a central stalk and a peripheral stalk. During catalysis, ATP synthesis in the catalytic domain of F(1) is coupled via a rotary mechanism of the central stalk subunits to proton translocation. Its function is as follows. Component of the F(0) channel, it forms part of the peripheral stalk, linking F(1) to F(0). In Dinoroseobacter shibae (strain DSM 16493 / NCIMB 14021 / DFL 12), this protein is ATP synthase subunit b 1.